A 265-amino-acid polypeptide reads, in one-letter code: 5'-nucleotidase SurE (265 aa).

A divalent metal cation is bound by residues aspartate 8, aspartate 9, serine 39, and asparagine 96.

This sequence belongs to the SurE nucleotidase family. It depends on a divalent metal cation as a cofactor.

The protein localises to the cytoplasm. The enzyme catalyses a ribonucleoside 5'-phosphate + H2O = a ribonucleoside + phosphate. Functionally, nucleotidase that shows phosphatase activity on nucleoside 5'-monophosphates. The chain is 5'-nucleotidase SurE from Rubrobacter xylanophilus (strain DSM 9941 / JCM 11954 / NBRC 16129 / PRD-1).